Reading from the N-terminus, the 261-residue chain is MEEELEPLNRPTLDPDESYAEEKIYGSSHREPNSRIRVFVSLLILSNTISFGLLGWIGLSSTQASLAIPEDYAIPPRIATQYKRFWWTTEYSSKNQSQQDELWNSIVWTYGMIGVDHEWSKSQHWPDTMSLPQDKTKAVYLLQAYHEIHCLGVLRRLMSQSLAGVDFSESEHTHAHIAHCFDSLLQSTICRADSTPLYTFGGTIVGSGQQHECRDWNALRDYATQNSACYTEESGFGGQCSDGDGLVPATPMETQQDGFWL.

The chain crosses the membrane as a helical span at residues 38-58 (VFVSLLILSNTISFGLLGWIG). N-linked (GlcNAc...) asparagine glycosylation is present at N95. Short sequence motifs (HXXHC) lie at residues 146 to 150 (HEIHC) and 176 to 180 (HIAHC).

It belongs to the ustYa family.

Its subcellular location is the membrane. It participates in mycotoxin biosynthesis. Functionally, hydroxylase; part of the gene cluster that mediates the biosynthesis of the mycotoxin cyclochlorotine, a hepatotoxic and carcinogenic cyclic chlorinated pentapeptide. Within the pathway, cctR performs the last step by hydroxylating cyclochlorotine to yield hydroxycyclochlorotine. The NRPS cctN initially catalyzes the condensation of L-serine (Ser), Pro, L-2-aminobutyrate (2Abu), Ser, and beta-Phe in this order to produce isocyclotine. After the dichlorination of Pro2 catalyzed by cctP2 to produce isocyclochlorotine, the cctO-mediated transacylation of isocyclochlorotine can furnish cyclochlorotine. The subsequent hydroxylation of cyclochlorotine by cctR yields hydroxycyclochlorotine as the final product. CctP1 probably acts as a phenylalanine aminomutase and provides the uncommon building block beta-Phe. Furthermore, 2Abu can be synthesized from threonine by one of the threonine dehydratases and transaminases localized outside of the cluster. The functions of the remaining proteins encoded by the cluster, cctM and cctT, have not been identified yet. The protein is Hydroxylase cctR of Talaromyces islandicus (Penicillium islandicum).